Reading from the N-terminus, the 180-residue chain is NADH-quinone oxidoreductase subunit I (180 aa).

2 4Fe-4S ferredoxin-type domains span residues I48–S80 and E90–D119. [4Fe-4S] cluster is bound by residues C60, C63, C66, C70, C99, C102, C105, and C109. The segment covering K161–D174 has biased composition (basic and acidic residues). The tract at residues K161 to P180 is disordered.

This sequence belongs to the complex I 23 kDa subunit family. In terms of assembly, NDH-1 is composed of 14 different subunits. Subunits NuoA, H, J, K, L, M, N constitute the membrane sector of the complex. Requires [4Fe-4S] cluster as cofactor.

The protein resides in the cell inner membrane. It catalyses the reaction a quinone + NADH + 5 H(+)(in) = a quinol + NAD(+) + 4 H(+)(out). Its function is as follows. NDH-1 shuttles electrons from NADH, via FMN and iron-sulfur (Fe-S) centers, to quinones in the respiratory chain. The immediate electron acceptor for the enzyme in this species is believed to be ubiquinone. Couples the redox reaction to proton translocation (for every two electrons transferred, four hydrogen ions are translocated across the cytoplasmic membrane), and thus conserves the redox energy in a proton gradient. The protein is NADH-quinone oxidoreductase subunit I of Aeromonas hydrophila subsp. hydrophila (strain ATCC 7966 / DSM 30187 / BCRC 13018 / CCUG 14551 / JCM 1027 / KCTC 2358 / NCIMB 9240 / NCTC 8049).